The chain runs to 288 residues: Probable branched-chain-amino-acid aminotransferase (288 aa).

The residue at position 153 (Lys-153) is an N6-(pyridoxal phosphate)lysine.

This sequence belongs to the class-IV pyridoxal-phosphate-dependent aminotransferase family. The cofactor is pyridoxal 5'-phosphate.

The catalysed reaction is L-leucine + 2-oxoglutarate = 4-methyl-2-oxopentanoate + L-glutamate. The enzyme catalyses L-isoleucine + 2-oxoglutarate = (S)-3-methyl-2-oxopentanoate + L-glutamate. It catalyses the reaction L-valine + 2-oxoglutarate = 3-methyl-2-oxobutanoate + L-glutamate. It participates in amino-acid biosynthesis; L-isoleucine biosynthesis; L-isoleucine from 2-oxobutanoate: step 4/4. It functions in the pathway amino-acid biosynthesis; L-leucine biosynthesis; L-leucine from 3-methyl-2-oxobutanoate: step 4/4. Its pathway is amino-acid biosynthesis; L-valine biosynthesis; L-valine from pyruvate: step 4/4. Its function is as follows. Acts on leucine, isoleucine and valine. The chain is Probable branched-chain-amino-acid aminotransferase (ilvE) from Rickettsia typhi (strain ATCC VR-144 / Wilmington).